The sequence spans 284 residues: Tropomyosin alpha-3 chain (284 aa).

Met-1 carries the post-translational modification N-acetylmethionine. A disordered region spans residues 1–43 (MEAIKKKMQMLKLDKENALDRAEQAEAEQKQAEERSKQLEDEL). Residues 1-284 (MEAIKKKMQM…DHALNDMTSI (284 aa)) are a coiled coil. An N-acetylalanine modification is found at Glu-2. Basic and acidic residues predominate over residues 12-40 (KLDKENALDRAEQAEAEQKQAEERSKQLE). Thr-53 carries the post-translational modification Phosphothreonine. A phosphoserine mark is found at Ser-61 and Ser-87. Residue Thr-108 is modified to Phosphothreonine. A phosphoserine mark is found at Ser-206 and Ser-215. N6-acetyllysine is present on Leu-228. A Phosphothreonine modification is found at Thr-252. A Phosphotyrosine modification is found at Tyr-261. At Ser-271 the chain carries Phosphoserine. Thr-282 is modified (phosphothreonine). Ser-283 is subject to Phosphoserine.

Belongs to the tropomyosin family. In terms of assembly, homodimer. Heterodimer of an alpha (TPM1, TPM3 or TPM4) and a beta (TPM2) chain. Interacts with TMOD1. Interacts with TNNT1.

It localises to the cytoplasm. Its subcellular location is the cytoskeleton. Its function is as follows. Binds to actin filaments in muscle and non-muscle cells. Plays a central role, in association with the troponin complex, in the calcium dependent regulation of vertebrate striated muscle contraction. Smooth muscle contraction is regulated by interaction with caldesmon. In non-muscle cells is implicated in stabilizing cytoskeleton actin filaments. In Bos taurus (Bovine), this protein is Tropomyosin alpha-3 chain (TPM3).